A 211-amino-acid chain; its full sequence is 2,3-bisphosphoglycerate-dependent phosphoglycerate mutase (211 aa).

Substrate-binding positions include 9 to 16 (RHGQSDWN), 22 to 23 (TG), arginine 61, 88 to 91 (ERDY), lysine 99, 115 to 116 (RR), and 159 to 160 (GN). Histidine 10 functions as the Tele-phosphohistidine intermediate in the catalytic mechanism. The active-site Proton donor/acceptor is glutamate 88.

The protein belongs to the phosphoglycerate mutase family. BPG-dependent PGAM subfamily. In terms of assembly, homodimer.

The catalysed reaction is (2R)-2-phosphoglycerate = (2R)-3-phosphoglycerate. It participates in carbohydrate degradation; glycolysis; pyruvate from D-glyceraldehyde 3-phosphate: step 3/5. In terms of biological role, catalyzes the interconversion of 2-phosphoglycerate and 3-phosphoglycerate. This Allorhizobium ampelinum (strain ATCC BAA-846 / DSM 112012 / S4) (Agrobacterium vitis (strain S4)) protein is 2,3-bisphosphoglycerate-dependent phosphoglycerate mutase.